We begin with the raw amino-acid sequence, 431 residues long: Glutamate-1-semialdehyde 2,1-aminomutase (431 aa).

K265 is modified (N6-(pyridoxal phosphate)lysine).

Belongs to the class-III pyridoxal-phosphate-dependent aminotransferase family. HemL subfamily. In terms of assembly, homodimer. It depends on pyridoxal 5'-phosphate as a cofactor.

Its subcellular location is the cytoplasm. The catalysed reaction is (S)-4-amino-5-oxopentanoate = 5-aminolevulinate. Its pathway is porphyrin-containing compound metabolism; protoporphyrin-IX biosynthesis; 5-aminolevulinate from L-glutamyl-tRNA(Glu): step 2/2. This chain is Glutamate-1-semialdehyde 2,1-aminomutase, found in Vibrio parahaemolyticus serotype O3:K6 (strain RIMD 2210633).